Consider the following 634-residue polypeptide: 1-deoxy-D-xylulose-5-phosphate synthase (634 aa).

Thiamine diphosphate is bound by residues His77 and Gly118–Ala120. Asp149 provides a ligand contact to Mg(2+). Residues Ala150–Ser151, Asn178, Tyr289, and Glu371 contribute to the thiamine diphosphate site. Asn178 lines the Mg(2+) pocket.

This sequence belongs to the transketolase family. DXPS subfamily. Homodimer. Requires Mg(2+) as cofactor. The cofactor is thiamine diphosphate.

The catalysed reaction is D-glyceraldehyde 3-phosphate + pyruvate + H(+) = 1-deoxy-D-xylulose 5-phosphate + CO2. It participates in metabolic intermediate biosynthesis; 1-deoxy-D-xylulose 5-phosphate biosynthesis; 1-deoxy-D-xylulose 5-phosphate from D-glyceraldehyde 3-phosphate and pyruvate: step 1/1. In terms of biological role, catalyzes the acyloin condensation reaction between C atoms 2 and 3 of pyruvate and glyceraldehyde 3-phosphate to yield 1-deoxy-D-xylulose-5-phosphate (DXP). This Leptospira interrogans serogroup Icterohaemorrhagiae serovar copenhageni (strain Fiocruz L1-130) protein is 1-deoxy-D-xylulose-5-phosphate synthase.